The sequence spans 49 residues: YLDSGLGAPVPYPDPLEPKREVCELNPNCDELADHIGFQEAYQRFYGPV.

Residues 1–47 (YLDSGLGAPVPYPDPLEPKREVCELNPNCDELADHIGFQEAYQRFYG) enclose the Gla domain. Glu17, Glu21, Glu24, and Asp30 together coordinate Ca(2+). Glu17, Glu21, and Glu24 each carry 4-carboxyglutamate. A disulfide bond links Cys23 and Cys29.

The protein belongs to the osteocalcin/matrix Gla protein family. Post-translationally, gamma-carboxyglutamate residues are formed by vitamin K dependent carboxylation by GGCX. These residues are essential for the binding of calcium. Decarboxylation promotes the hormone activity.

It is found in the secreted. Functionally, the carboxylated form is one of the main organic components of the bone matrix, which constitutes 1-2% of the total bone protein. It acts as a negative regulator of bone formation and is required to limit bone formation without impairing bone resorption or mineralization. The carboxylated form binds strongly to apatite and calcium. Its function is as follows. The uncarboxylated form acts as a hormone secreted by osteoblasts, which regulates different cellular processes, such as energy metabolism, male fertility and brain development. Regulates of energy metabolism by acting as a hormone favoring pancreatic beta-cell proliferation, insulin secretion and sensitivity and energy expenditure. Uncarboxylated osteocalcin hormone also promotes testosterone production in the testes: acts as a ligand for G protein-coupled receptor GPRC6A at the surface of Leydig cells, initiating a signaling response that promotes the expression of enzymes required for testosterone synthesis in a CREB-dependent manner. Also acts as a regulator of brain development: osteocalcin hormone crosses the blood-brain barrier and acts as a ligand for GPR158 on neurons, initiating a signaling response that prevents neuronal apoptosis in the hippocampus, favors the synthesis of all monoamine neurotransmitters and inhibits that of gamma-aminobutyric acid (GABA). Osteocalcin also crosses the placenta during pregnancy and maternal osteocalcin is required for fetal brain development. The protein is Osteocalcin (BGLAP) of Canis lupus familiaris (Dog).